Consider the following 115-residue polypeptide: Large ribosomal subunit protein bL19 (115 aa).

Belongs to the bacterial ribosomal protein bL19 family.

This protein is located at the 30S-50S ribosomal subunit interface and may play a role in the structure and function of the aminoacyl-tRNA binding site. This chain is Large ribosomal subunit protein bL19, found in Thermosipho africanus (strain TCF52B).